A 392-amino-acid polypeptide reads, in one-letter code: MSRVPTPPPPGEMTSGPVAESWCYTQVKVVKFSYMWTINNFSFCREEMGEVVRSSTFSSGPNDKMKWCLRVNPKGLDDESKDYLSLYLLLVSCPKSEVRAKFKFSLLNAKREETKAMESQRAYRFVQGKDWGFKKFIRRDFLLDEANGLLPDDKLTLFCEVSVVQDSVNISGQSNTNMLKVPECQLSDDLGNLWEGSRFTDCSLFVGGQEFKAHKSILAARSPVFNAMFEHKMEESKKNRVDISDVEPDVFREMMVFIYTGKAPNLEKMADNLLAAADKYALERLKVLCEEALCNSLSVENVADVLILADLHSAEQLKAQAIDFINRCSVLRQLGCKDGKNWNSNHAADIMETAGWKAMIQSHPHLVAEAFRALASAQCTPFGLPRKRLKQS.

One can recognise an MATH domain in the interval 31–161; sequence KFSYMWTINN…DDKLTLFCEV (131 aa). One can recognise a BTB domain in the interval 200–267; sequence TDCSLFVGGQ…IYTGKAPNLE (68 aa).

This sequence belongs to the Tdpoz family. Homodimer. Heterodimer with SPOP. Component of cullin-RING-based BCR (BTB-CUL3-RBX1) E3 ubiquitin-protein ligase complexes containing homodimeric SPOPL or the heterodimer formed by SPOP and SPOPL.

The protein resides in the nucleus. Its pathway is protein modification; protein ubiquitination. In terms of biological role, component of a cullin-RING-based BCR (BTB-CUL3-RBX1) E3 ubiquitin-protein ligase complex that mediates the ubiquitination and subsequent proteasomal degradation of target proteins, but with relatively low efficiency. The protein is Speckle-type POZ protein-like B (spoplb) of Danio rerio (Zebrafish).